The following is a 277-amino-acid chain: Large ribosomal subunit protein uL2 (277 aa).

A disordered region spans residues 219 to 277; sequence TVRGSVMNPNDHPHGGGEGRSPIGHPSPRTPWGKPALGYKTRKNKKYSDRFIVKRRHDK.

It belongs to the universal ribosomal protein uL2 family. As to quaternary structure, part of the 50S ribosomal subunit. Forms a bridge to the 30S subunit in the 70S ribosome.

One of the primary rRNA binding proteins. Required for association of the 30S and 50S subunits to form the 70S ribosome, for tRNA binding and peptide bond formation. It has been suggested to have peptidyltransferase activity; this is somewhat controversial. Makes several contacts with the 16S rRNA in the 70S ribosome. This Clostridium botulinum (strain 657 / Type Ba4) protein is Large ribosomal subunit protein uL2.